The sequence spans 182 residues: UPF0397 protein llmg_0343 (182 aa).

5 helical membrane passes run 8 to 28, 42 to 62, 74 to 94, 114 to 134, and 146 to 166; these read IVVA…LINI, AVLA…IGFI, APWW…GFGV, IVQF…GDIL, and QGVV…TLLL.

It belongs to the UPF0397 family.

It is found in the cell membrane. This Lactococcus lactis subsp. cremoris (strain MG1363) protein is UPF0397 protein llmg_0343.